A 417-amino-acid chain; its full sequence is Phosphoglycerate kinase 1 (417 aa).

Val23, Asp24, Phe25, Asn26, Asn38, Arg39, Ser62, His63, Gly65, Arg66, Leu121, Arg122, His168, and Arg169 together coordinate (2R)-3-phosphoglycerate. Gly212 contacts ADP. Gly212 provides a ligand contact to CDP. Positions 213 and 214 each coordinate AMP. Residue Ala213 participates in ATP binding. Ala213 lines the Mg(2+) pocket. Asp217 is a CDP binding site. Asp217 serves as a coordination point for Mg(2+). Lys218 lines the AMP pocket. Position 218 (Lys218) interacts with ATP. Position 236 (Gly236) interacts with ADP. Position 236 (Gly236) interacts with CDP. Residues Gly237 and Gly311 each coordinate AMP. Gly237 and Gly311 together coordinate ATP. CDP-binding residues include Gly336 and Phe341. Phe341 is a binding site for ADP. Glu342 is a binding site for AMP. The ATP site is built by Glu342, Asp374, and Thr375. A Mg(2+)-binding site is contributed by Asp374.

It belongs to the phosphoglycerate kinase family. In terms of assembly, monomer. The cofactor is Mg(2+).

Its subcellular location is the cytoplasm. The protein resides in the mitochondrion. The catalysed reaction is (2R)-3-phosphoglycerate + ATP = (2R)-3-phospho-glyceroyl phosphate + ADP. Its pathway is carbohydrate degradation; glycolysis; pyruvate from D-glyceraldehyde 3-phosphate: step 2/5. Its function is as follows. Catalyzes one of the two ATP producing reactions in the glycolytic pathway via the reversible conversion of 1,3-diphosphoglycerate to 3-phosphoglycerate. Both L- and D- forms of purine and pyrimidine nucleotides can be used as substrates, but the activity is much lower on pyrimidines. Negatively regulates the biosynthesis of acetyl-CoA from pyruvate in the mitochondrion. This is Phosphoglycerate kinase 1 (PGK1) from Rhizopus niveus.